Reading from the N-terminus, the 142-residue chain is Deoxyuridine 5'-triphosphate nucleotidohydrolase (142 aa).

Substrate-binding positions include 62–64 (RSG), asparagine 75, and 79–81 (TID).

This sequence belongs to the dUTPase family. Mg(2+) is required as a cofactor.

It catalyses the reaction dUTP + H2O = dUMP + diphosphate + H(+). It participates in pyrimidine metabolism; dUMP biosynthesis; dUMP from dCTP (dUTP route): step 2/2. Functionally, this enzyme is involved in nucleotide metabolism: it produces dUMP, the immediate precursor of thymidine nucleotides and it decreases the intracellular concentration of dUTP so that uracil cannot be incorporated into DNA. The polypeptide is Deoxyuridine 5'-triphosphate nucleotidohydrolase (Picosynechococcus sp. (strain ATCC 27264 / PCC 7002 / PR-6) (Agmenellum quadruplicatum)).